A 597-amino-acid chain; its full sequence is Ran-binding protein 9 (597 aa).

Residues 29-216 (LNQRLRRLYP…VDANFGQHPF (188 aa)) enclose the B30.2/SPRY domain. The 33-residue stretch at 247–279 (WQAMIQKMVASYLVHHSYCATAEAFAKSTDQAV) folds into the LisH domain. The region spanning 285-342 (SIKNRQKIQKLVLSGRMGEAIETTQQLYPSLLERNPDLLFMLKVRQFIEMVNGTDSEV) is the CTLH domain. 3 disordered regions span residues 343-375 (RCLGGRSPKSQDSYPGSPRLFNSPVHKPSSSQA), 389-417 (SSSKGHTSAHSHKSCPPTLSSPELGVLNG), and 437-475 (SNGVSESSSNGFLNGSSTHGTEQEDCDADMEVDSTQSKR). Over residues 438–456 (NGVSESSSNGFLNGSSTHG) the composition is skewed to polar residues. A compositionally biased stretch (acidic residues) spans 459–468 (QEDCDADMEV).

It belongs to the RANBP9/10 family. As to quaternary structure, identified in the CTLH complex that contains at least MAEA, RMND5A (or alternatively its paralog RMND5B), GID8, WDR26, and RANBP9 and/or RANBP10.

It localises to the cytoplasm. The protein resides in the cell membrane. The protein localises to the nucleus. May act as scaffolding protein, and as adapter protein to couple membrane receptors to intracellular signaling pathways. Acts as a mediator of cell spreading and actin cytoskeleton rearrangement. Core component of the CTLH E3 ubiquitin-protein ligase complex that mediates ubiquitination and subsequent proteasomal degradation of target proteins. The chain is Ran-binding protein 9 (ranbp9) from Danio rerio (Zebrafish).